The sequence spans 391 residues: Multidrug resistance protein MdtL (391 aa).

Transmembrane regions (helical) follow at residues 4 to 24, 42 to 62, 69 to 89, 93 to 113, 131 to 151, 158 to 178, 203 to 222, 245 to 265, 269 to 289, 293 to 313, 331 to 351, and 356 to 376; these read FLICSFALVLLYPAGIDMYLV, IAFSVYLAGMAAAMLFAGKVA, PVAIPGAALFIIASVFCSLAE, LFLAGRFLQGLGAGCCYVVAF, LLNGITCIIPVLAPVLGHLIM, SLFWAMAMMGIAVLMLSLFIL, FFLSRVVITTLSVSVILTFV, ALTAGVSMTVSFSTPFALGIF, TLMITSQVLFLAAGITLAVSP, VSLFGITLICAGFSVGFGVAM, LGIAQVCGSSLWIWLAAVVGI, and MLIGILIACSIVSLLLIMFVA.

Belongs to the major facilitator superfamily. DHA1 family. MdtL (TC 2.A.1.2.22) subfamily.

Its subcellular location is the cell inner membrane. In terms of biological role, confers resistance to chloramphenicol. The polypeptide is Multidrug resistance protein MdtL (Escherichia coli (strain 55989 / EAEC)).